The chain runs to 761 residues: BMP/retinoic acid-inducible neural-specific protein 1 (761 aa).

Residues 1–19 form the signal peptide; it reads MNWRFVELLYFLFIWGRIS. The MACPF domain occupies 68-251; the sequence is RYKIYREFAR…FVQSALSYIM (184 aa). N-linked (GlcNAc...) asparagine glycosylation is found at Asn156, Asn433, Asn443, Asn553, Asn599, Asn631, and Asn677.

This sequence belongs to the BRINP family. Highly expressed in brain. Weakly expressed in heart, lung, skeletal muscle, kidney, thymus, prostate, testis and small intestine.

The protein localises to the cytoplasm. Its function is as follows. Plays a role in neurogenesis and brain development. May suppress cell cycle progression in postmitotic neurons by inhibiting G1/S transition. In Homo sapiens (Human), this protein is BMP/retinoic acid-inducible neural-specific protein 1 (BRINP1).